We begin with the raw amino-acid sequence, 327 residues long: 2-methoxy-6-polyprenyl-1,4-benzoquinol methylase, mitochondrial (327 aa).

Residues 1 to 43 (MAAPIRAFVLRVLSDSTRNIHHVLRCRSKYLCRRAAITARRGY) constitute a mitochondrion transit peptide. S-adenosyl-L-methionine-binding positions include threonine 117, aspartate 171, and 199-200 (DA).

This sequence belongs to the class I-like SAM-binding methyltransferase superfamily. MenG/UbiE family. Component of a multi-subunit COQ enzyme complex, composed of at least coq3, coq4, coq5, coq6, coq7 and coq9.

The protein localises to the mitochondrion inner membrane. The enzyme catalyses a 2-methoxy-6-(all-trans-polyprenyl)benzene-1,4-diol + S-adenosyl-L-methionine = a 5-methoxy-2-methyl-3-(all-trans-polyprenyl)benzene-1,4-diol + S-adenosyl-L-homocysteine + H(+). Its pathway is cofactor biosynthesis; ubiquinone biosynthesis. Methyltransferase required for the conversion of 2-polyprenyl-6-methoxy-1,4-benzoquinol (DDMQH2) to 2-polyprenyl-3-methyl-6-methoxy-1,4-benzoquinol (DMQH2). In Danio rerio (Zebrafish), this protein is 2-methoxy-6-polyprenyl-1,4-benzoquinol methylase, mitochondrial.